The sequence spans 108 residues: Ig kappa chain V region K-25 (108 aa).

A framework-1 region spans residues 1 to 23; it reads AVELTQTPASVEAAVGGTVTIKC. Residues 24–34 form a complementarity-determining-1 region; that stretch reads QASQBIYSYLS. A framework-2 region spans residues 35–49; sequence WYQQKPGQPPKLLIY. The segment at 50 to 56 is complementarity-determining-2; sequence KASTLAS. The interval 57–88 is framework-3; that stretch reads GVSSRFKGSGSGTEFTLTISDLZCADAATYYC. The complementarity-determining-3 stretch occupies residues 89–97; the sequence is QTYSYSSTY. A framework-4 region spans residues 98–107; that stretch reads FGGGTEVVVK.

The sequence is that of Ig kappa chain V region K-25 from Oryctolagus cuniculus (Rabbit).